Consider the following 912-residue polypeptide: Protein translocase subunit SecA (912 aa).

ATP contacts are provided by residues Q87, 105-109, and D508; that span reads GEGKT. The tract at residues 855–912 is disordered; the sequence is QHQDAGGYGADEEVEQMQGGNAPVPVSQVTRDEPKVGRNDPCPCGSGKKYKHCHGQLS. The Zn(2+) site is built by C896, C898, C907, and H908. Positions 902 to 912 are enriched in basic residues; it reads KKYKHCHGQLS.

Belongs to the SecA family. Monomer and homodimer. Part of the essential Sec protein translocation apparatus which comprises SecA, SecYEG and auxiliary proteins SecDF-YajC and YidC. Requires Zn(2+) as cofactor.

It localises to the cell inner membrane. The protein resides in the cytoplasm. It catalyses the reaction ATP + H2O + cellular proteinSide 1 = ADP + phosphate + cellular proteinSide 2.. In terms of biological role, part of the Sec protein translocase complex. Interacts with the SecYEG preprotein conducting channel. Has a central role in coupling the hydrolysis of ATP to the transfer of proteins into and across the cell membrane, serving both as a receptor for the preprotein-SecB complex and as an ATP-driven molecular motor driving the stepwise translocation of polypeptide chains across the membrane. The polypeptide is Protein translocase subunit SecA (Xanthomonas campestris pv. campestris (strain 8004)).